An 883-amino-acid polypeptide reads, in one-letter code: Valine--tRNA ligase (883 aa).

Residues 52 to 62 carry the 'HIGH' region motif; it reads PNVTGRLHLGH. Residues 529 to 533 carry the 'KMSKS' region motif; sequence KMSKS. Lys532 contacts ATP. Residues 813–848 are a coiled coil; it reads LEGLIDFDKEIKRLENELAKWTKEVERVQKKLSNQG.

Belongs to the class-I aminoacyl-tRNA synthetase family. ValS type 1 subfamily. As to quaternary structure, monomer.

The protein localises to the cytoplasm. It carries out the reaction tRNA(Val) + L-valine + ATP = L-valyl-tRNA(Val) + AMP + diphosphate. In terms of biological role, catalyzes the attachment of valine to tRNA(Val). As ValRS can inadvertently accommodate and process structurally similar amino acids such as threonine, to avoid such errors, it has a 'posttransfer' editing activity that hydrolyzes mischarged Thr-tRNA(Val) in a tRNA-dependent manner. In Oceanobacillus iheyensis (strain DSM 14371 / CIP 107618 / JCM 11309 / KCTC 3954 / HTE831), this protein is Valine--tRNA ligase.